The chain runs to 139 residues: MHEASYALTIVDTVMEALKKEGLENVKVTKVIIKIGELSLVDPVALRNAFEAYSLGSPLEGAELEIEVVPSKFVCKRCGHEWTFKDVYPELKANIPVIHLYPHLVKDLLKCPKCNSSEVEIVQGTEFVIEGFEYQESNE.

Residue His2 participates in Ni(2+) binding. Positions 75, 78, 111, and 114 each coordinate Zn(2+).

It belongs to the HypA/HybF family.

Functionally, involved in the maturation of [NiFe] hydrogenases. Required for nickel insertion into the metal center of the hydrogenase. This is Hydrogenase maturation factor HypA from Ignicoccus hospitalis (strain KIN4/I / DSM 18386 / JCM 14125).